The primary structure comprises 396 residues: S-adenosylmethionine synthase (396 aa).

H16 contributes to the ATP binding site. Residue D18 participates in Mg(2+) binding. A K(+)-binding site is contributed by E44. L-methionine-binding residues include E57 and Q100. The interval 100–110 (QSVDIAQGVDR) is flexible loop. Residues 165-167 (DAK), D240, 246-247 (RK), A263, and K267 each bind ATP. Residue D240 participates in L-methionine binding. K271 lines the L-methionine pocket.

It belongs to the AdoMet synthase family. In terms of assembly, homotetramer; dimer of dimers. The cofactor is Mg(2+). Requires K(+) as cofactor.

It is found in the cytoplasm. The catalysed reaction is L-methionine + ATP + H2O = S-adenosyl-L-methionine + phosphate + diphosphate. It functions in the pathway amino-acid biosynthesis; S-adenosyl-L-methionine biosynthesis; S-adenosyl-L-methionine from L-methionine: step 1/1. Catalyzes the formation of S-adenosylmethionine (AdoMet) from methionine and ATP. The overall synthetic reaction is composed of two sequential steps, AdoMet formation and the subsequent tripolyphosphate hydrolysis which occurs prior to release of AdoMet from the enzyme. The sequence is that of S-adenosylmethionine synthase from Pseudomonas putida (strain ATCC 700007 / DSM 6899 / JCM 31910 / BCRC 17059 / LMG 24140 / F1).